Here is a 338-residue protein sequence, read N- to C-terminus: Methionyl-tRNA formyltransferase (338 aa).

A (6S)-5,6,7,8-tetrahydrofolate-binding site is contributed by 110–113; sequence SLLP.

Belongs to the Fmt family.

The enzyme catalyses L-methionyl-tRNA(fMet) + (6R)-10-formyltetrahydrofolate = N-formyl-L-methionyl-tRNA(fMet) + (6S)-5,6,7,8-tetrahydrofolate + H(+). Attaches a formyl group to the free amino group of methionyl-tRNA(fMet). The formyl group appears to play a dual role in the initiator identity of N-formylmethionyl-tRNA by promoting its recognition by IF2 and preventing the misappropriation of this tRNA by the elongation apparatus. In Synechococcus sp. (strain CC9605), this protein is Methionyl-tRNA formyltransferase.